We begin with the raw amino-acid sequence, 384 residues long: Organic solute transporter alpha-like protein 1 (384 aa).

Residues 1-38 (MEIVKTIIPHNRSYIEPPIPSATEWLANMSVMHVSCLT) are Extracellular-facing. N-linked (GlcNAc...) asparagine glycans are attached at residues asparagine 11 and asparagine 28. The chain crosses the membrane as a helical span at residues 39–59 (IACVFVAITFLSSFFHLFFVL). The Cytoplasmic segment spans residues 60–70 (KYVSNERIRND). The chain crosses the membrane as a helical span at residues 71–91 (MYALIFMFPITTFASLVGMFI). The Extracellular portion of the chain corresponds to 92–93 (PR). Residues 94–114 (AAIFLYAVSLVYFMFTLFIMV) form a helical membrane-spanning segment. Topologically, residues 115–165 (TLLFNIFGGRQEMSAYLLQRNIRVNFTVPPLCFFKFLPTVESTDQNLRRIE) are cytoplasmic. Residues 166 to 186 (WLVFQTPIIRTLLELVSVVVS) traverse the membrane as a helical segment. The Extracellular segment spans residues 187 to 202 (MEQEGRRESVWFVFSQ). The helical transmembrane segment at 203–223 (LMALLSMCIAFYGCYVMVPLG) threads the bilayer. Topologically, residues 224 to 240 (REKHAPYRFDFLFRTCD) are cytoplasmic. The chain crosses the membrane as a helical span at residues 241–261 (IAQCIYTIQKFVFEFAAAVGL). The Extracellular segment spans residues 262–273 (ITSDRYLPAAAK). A helical transmembrane segment spans residues 274-294 (ALWWASFMCTWEMMLLSALCS). At 295-384 (YCLRPAKCKF…FDSLSQIQGQ (90 aa)) the chain is on the cytoplasmic side.

This sequence belongs to the OST-alpha family.

Its subcellular location is the cell membrane. Functionally, probable transporter. The sequence is that of Organic solute transporter alpha-like protein 1 (osta-1) from Caenorhabditis elegans.